The chain runs to 307 residues: Taste receptor type 2 member 10 (307 aa).

Residues 1 to 6 (MLRVVE) lie on the Extracellular side of the membrane. Residues 7–27 (GIFIFVVVSESVFGVLGNGFI) traverse the membrane as a helical segment. At 28–42 (GLVNCIDCAKNKLST) the chain is on the cytoplasmic side. The helical transmembrane segment at 43–63 (IGFILTGLAISRIFLIWIIIT) threads the bilayer. The Extracellular segment spans residues 64–100 (DGFIQIFSPNIYASGNLIEYISYFWVIGNQSSMWFAT). N-linked (GlcNAc...) asparagine glycosylation is present at asparagine 92. Residues 101–121 (SLSIFYFLKIANFSNYIFLWL) traverse the membrane as a helical segment. Residues 122–126 (KSRTN) lie on the Cytoplasmic side of the membrane. Residues 127 to 147 (MVLPFMIVFLLISSLLNFAYI) form a helical membrane-spanning segment. Residues 148–179 (AKILNDYKTKNDTVWDLNMYKSEYFIKQILLN) lie on the Extracellular side of the membrane. Asparagine 158 is a glycosylation site (N-linked (GlcNAc...) asparagine). Residues 180–200 (LGVIFFFTLSLITCIFLIISL) traverse the membrane as a helical segment. Over 201–227 (WRHNRQMQSNVTGLRDSNTEAHVKAMK) the chain is Cytoplasmic. The helical transmembrane segment at 228-248 (VLISFIILFILYFIGMAIEIS) threads the bilayer. At 249–257 (CFTVRENKL) the chain is on the extracellular side. A helical transmembrane segment spans residues 258-278 (LLMFGMTTTAIYPWGHSFILI). Residues 279–307 (LGNSKLKQASLRVLQQLKCCEKRKNLRVT) are Cytoplasmic-facing.

This sequence belongs to the G-protein coupled receptor T2R family. Expressed in subsets of taste receptor cells of the tongue and palate epithelium and exclusively in gustducin-positive cells.

Its subcellular location is the membrane. Its function is as follows. Gustducin-coupled strychnine receptor implicated in the perception of bitter compounds in the oral cavity and the gastrointestinal tract. Signals through PLCB2 and the calcium-regulated cation channel TRPM5. The polypeptide is Taste receptor type 2 member 10 (TAS2R10) (Homo sapiens (Human)).